The chain runs to 747 residues: Elongation factor G, mitochondrial (747 aa).

Residues 1–32 (MTLITRVLNSNLPLRLSALKTVRQLQCGYSSH) constitute a mitochondrion transit peptide. A tr-type G domain is found at 42-319 (ERIRNIGISA…AIIDYLPNPG (278 aa)). Residues 51–58 (AHIDSGKT), 118–122 (DTPGH), and 172–175 (NKLD) contribute to the GTP site.

This sequence belongs to the TRAFAC class translation factor GTPase superfamily. Classic translation factor GTPase family. EF-G/EF-2 subfamily.

It is found in the mitochondrion. The protein operates within protein biosynthesis; polypeptide chain elongation. Mitochondrial GTPase that catalyzes the GTP-dependent ribosomal translocation step during translation elongation. During this step, the ribosome changes from the pre-translocational (PRE) to the post-translocational (POST) state as the newly formed A-site-bound peptidyl-tRNA and P-site-bound deacylated tRNA move to the P and E sites, respectively. Catalyzes the coordinated movement of the two tRNA molecules, the mRNA and conformational changes in the ribosome. Essential during development as it acts as a retrograde signal from mitochondria to the nucleus to slow down cell proliferation if mitochondrial energy output is low. In Drosophila virilis (Fruit fly), this protein is Elongation factor G, mitochondrial.